An 840-amino-acid polypeptide reads, in one-letter code: Urease (840 aa).

The Urease domain occupies 402–840 (GAIDCHVHYI…VPLSRNYFLF (439 aa)). Residues His-407, His-409, and Lys-490 each coordinate Ni(2+). Residue Lys-490 is modified to N6-carboxylysine. Substrate is bound at residue His-492. Ni(2+)-binding residues include His-519 and His-545. His-593 (proton donor) is an active-site residue. Asp-633 contacts Ni(2+).

The protein in the C-terminal section; belongs to the metallo-dependent hydrolases superfamily. Urease alpha subunit family. Homohexamer. Other oligomeric forms may exist depending on pH and presence of salts. It depends on Ni cation as a cofactor. Post-translationally, carboxylation allows a single lysine to coordinate two nickel ions.

It catalyses the reaction urea + 2 H2O + H(+) = hydrogencarbonate + 2 NH4(+). The protein operates within nitrogen metabolism; urea degradation; CO(2) and NH(3) from urea (urease route): step 1/1. With respect to regulation, P-hydroxymercuribenzoate irreversibly abolishes ureolytic activity, but does not inhibit the ability to activate platelets. Also inhibited by acetohydroxamic acid (AHA), a chelator of Ni2+ and Zn2+ ions. Urea hydrolase involved in nitrogen recycling from ureide, purine, and arginine catabolism. Is known to be highly toxic and lethal when given by intravenous route, producing convulsions and other signs of central nervous system intoxication associated with the high levels of ammonia formed in the blood of mice and rabbits. Is neurotoxic in mammals, when directly injected into hippocampus. It may induce seizures by acting at a neuronal network level, thereby disturbing electroencephalographic rhythms and causing metabolic alterations in key areas related to epileptogenesis and to neurogenic pulmonary edema. It increases calcium influx and neuronal firing rate in the hippocampus. Is able to insert itself into lipid bilayers, altering physicochemical properties of artificial membranes, and forming cation-selective ion channels. In vitro, has the ability to induce platelet aggregation, platelet granules secretion and release of ATP. In contrast to canatoxin, another urease from C.ensiformis, is not lethal to mice when intraperitoneally injected. The protein is Urease of Canavalia ensiformis (Jack bean).